The primary structure comprises 422 residues: Replication factor C large subunit (422 aa).

Residue 63–70 (GPPGIGKT) participates in ATP binding.

The protein belongs to the activator 1 small subunits family. RfcL subfamily. In terms of assembly, heteromultimer composed of small subunits (RfcS) and large subunits (RfcL).

In terms of biological role, part of the RFC clamp loader complex which loads the PCNA sliding clamp onto DNA. The polypeptide is Replication factor C large subunit (Pyrobaculum neutrophilum (strain DSM 2338 / JCM 9278 / NBRC 100436 / V24Sta) (Thermoproteus neutrophilus)).